The chain runs to 282 residues: Putative hydrolase BamMC406_5393 (282 aa).

Mg(2+)-binding residues include E124, E126, and D155.

Belongs to the FAH family. Requires Mg(2+) as cofactor.

This is Putative hydrolase BamMC406_5393 from Burkholderia ambifaria (strain MC40-6).